Here is a 447-residue protein sequence, read N- to C-terminus: Serine/threonine-protein phosphatase 2A 55 kDa regulatory subunit B gamma isoform (447 aa).

7 WD repeats span residues 22–61, 87–128, 171–209, 220–260, 279–317, 334–375, and 410–446; these read TEAD…KNAP, EIEE…KRPE, GHTY…RSFN, DLTE…LCDK, EIIS…RPIE, ESDC…DVTL, and DFTK…NSDM.

This sequence belongs to the phosphatase 2A regulatory subunit B family. PP2A consists of a common heterodimeric core enzyme, composed of a 36 kDa catalytic subunit (subunit C) and a 65 kDa constant regulatory subunit (PR65 or subunit A), that associates with a variety of regulatory subunits. Proteins that associate with the core dimer include three families of regulatory subunits B (the R2/B/PR55/B55, R3/B''/PR72/PR130/PR59 and R5/B'/B56 families), the 48 kDa variable regulatory subunit, viral proteins, and cell signaling molecules. Interacts with IER5. As to expression, highly expressed in brain.

Functionally, the B regulatory subunit might modulate substrate selectivity and catalytic activity, and might also direct the localization of the catalytic enzyme to a particular subcellular compartment. The sequence is that of Serine/threonine-protein phosphatase 2A 55 kDa regulatory subunit B gamma isoform (Ppp2r2c) from Rattus norvegicus (Rat).